A 63-amino-acid polypeptide reads, in one-letter code: Protein DsrB (63 aa).

Belongs to the DsrB family.

This chain is Protein DsrB, found in Yersinia pseudotuberculosis serotype O:3 (strain YPIII).